A 303-amino-acid polypeptide reads, in one-letter code: Protease HtpX (303 aa).

The next 2 membrane-spanning stretches (helical) occupy residues 4-24 (IGLFLLTNLAVLVVFSIVFGI) and 42-62 (IASLAVMCAVYGMIGSMISLF). A Zn(2+)-binding site is contributed by histidine 149. Glutamate 150 is an active-site residue. Histidine 153 contributes to the Zn(2+) binding site. The next 2 membrane-spanning stretches (helical) occupy residues 157–177 (GDMVTLALIQGVVNAFVMFFA) and 200–220 (FVTSIVMDILLGFLASAIVMW). Zn(2+) is bound at residue glutamate 226.

This sequence belongs to the peptidase M48B family. Zn(2+) serves as cofactor.

It is found in the cell inner membrane. The sequence is that of Protease HtpX from Psychrobacter sp. (strain PRwf-1).